A 196-amino-acid polypeptide reads, in one-letter code: Sesquiterpene phosphatase astK (196 aa).

It belongs to the HAD-like hydrolase superfamily.

It catalyses the reaction (S,S)-drim-8-en-11-yl phosphate + H2O = (S,S)-drim-8-en-11-ol + phosphate. It participates in secondary metabolite biosynthesis; terpenoid biosynthesis. Sesquiterpene phosphatase; part of the gene cluster that mediates the biosynthesis of astellolides, drimane-type sesquiterpene esters that show antimicrobial, anti-inflammatory, and anti-tumor activities. The first step in astellolide biosynthesis is performed by the sesquiterpene cyclase astC that catalyzes the formation of drimanyl pyrophosphate from farnesyl pyrophosphate. Drimanyl pyrophosphate is then dephosphorylated by the sesquiterpene phosphatase astI to produce drimanyl monophosphate which is further dephosphorylated to drim-8-ene-11-ol by atsK. Drim-8-ene-11-ol is converted to confertifolin, probably by the cytochrome P450 monooxygenase astD and/or the dehydrogenase astE. The cytochrome P450 monooxygenases astB, astF and astJ then hydroxylate confertifolin at C6, C14, or C15 to form trihydroxy confertifolin. The nonribosomal peptide synthetase astA catalyzes ester bond formation between trihydroxy contifolin and benzoic acid (BA) or 4-hydroxy benzoic acid (4HBA), leading to the formation of dideacetyl astellolides A and B, respectively. Finally, the O-acetyltransferase astG converts dideacetyl astellolides A and B into deacetyl astellolides A and B. This Aspergillus oryzae (strain ATCC 42149 / RIB 40) (Yellow koji mold) protein is Sesquiterpene phosphatase astK.